Here is a 441-residue protein sequence, read N- to C-terminus: UDP-N-acetylmuramoylalanine--D-glutamate ligase (441 aa).

113-119 (GSNAKST) lines the ATP pocket.

The protein belongs to the MurCDEF family.

It localises to the cytoplasm. The enzyme catalyses UDP-N-acetyl-alpha-D-muramoyl-L-alanine + D-glutamate + ATP = UDP-N-acetyl-alpha-D-muramoyl-L-alanyl-D-glutamate + ADP + phosphate + H(+). The protein operates within cell wall biogenesis; peptidoglycan biosynthesis. In terms of biological role, cell wall formation. Catalyzes the addition of glutamate to the nucleotide precursor UDP-N-acetylmuramoyl-L-alanine (UMA). This is UDP-N-acetylmuramoylalanine--D-glutamate ligase from Alcanivorax borkumensis (strain ATCC 700651 / DSM 11573 / NCIMB 13689 / SK2).